A 501-amino-acid chain; its full sequence is Lysine--tRNA ligase (501 aa).

The Mg(2+) site is built by Glu-411 and Glu-418.

The protein belongs to the class-II aminoacyl-tRNA synthetase family. As to quaternary structure, homodimer. The cofactor is Mg(2+).

It localises to the cytoplasm. It catalyses the reaction tRNA(Lys) + L-lysine + ATP = L-lysyl-tRNA(Lys) + AMP + diphosphate. This Thiobacillus denitrificans (strain ATCC 25259 / T1) protein is Lysine--tRNA ligase.